The primary structure comprises 412 residues: Arginine biosynthesis bifunctional protein ArgJ (412 aa).

Residues Thr158, Lys184, Thr195, Glu284, Asn407, and Ser412 each coordinate substrate. Thr195 acts as the Nucleophile in catalysis.

Belongs to the ArgJ family. Heterotetramer of two alpha and two beta chains.

Its subcellular location is the cytoplasm. It catalyses the reaction N(2)-acetyl-L-ornithine + L-glutamate = N-acetyl-L-glutamate + L-ornithine. It carries out the reaction L-glutamate + acetyl-CoA = N-acetyl-L-glutamate + CoA + H(+). Its pathway is amino-acid biosynthesis; L-arginine biosynthesis; L-ornithine and N-acetyl-L-glutamate from L-glutamate and N(2)-acetyl-L-ornithine (cyclic): step 1/1. It functions in the pathway amino-acid biosynthesis; L-arginine biosynthesis; N(2)-acetyl-L-ornithine from L-glutamate: step 1/4. In terms of biological role, catalyzes two activities which are involved in the cyclic version of arginine biosynthesis: the synthesis of N-acetylglutamate from glutamate and acetyl-CoA as the acetyl donor, and of ornithine by transacetylation between N(2)-acetylornithine and glutamate. The chain is Arginine biosynthesis bifunctional protein ArgJ from Bartonella quintana (strain Toulouse) (Rochalimaea quintana).